The sequence spans 217 residues: Yop proteins translocation protein R (217 aa).

Helical transmembrane passes span 11–31 (IIVLSLLTLLPLISVMATSFV), 53–73 (MAMYGLAIILSLYVMAPVGFA), 157–177 (IGFLIYLPFIVIDLVISNILL), and 181–201 (MMMVSPMTISLPFKLLLFVLL).

Belongs to the FliP/MopC/SpaP family.

It is found in the cell membrane. Its function is as follows. Component of the yop secretion machinery. May have a role in the negative pathway regulation of yop expression controlled by calcium. The chain is Yop proteins translocation protein R (yscR) from Yersinia pestis.